The sequence spans 274 residues: Ribosomal RNA small subunit methyltransferase A (274 aa).

Histidine 15, leucine 17, glycine 42, glutamate 64, aspartate 89, and asparagine 109 together coordinate S-adenosyl-L-methionine.

It belongs to the class I-like SAM-binding methyltransferase superfamily. rRNA adenine N(6)-methyltransferase family. RsmA subfamily.

The protein localises to the cytoplasm. The catalysed reaction is adenosine(1518)/adenosine(1519) in 16S rRNA + 4 S-adenosyl-L-methionine = N(6)-dimethyladenosine(1518)/N(6)-dimethyladenosine(1519) in 16S rRNA + 4 S-adenosyl-L-homocysteine + 4 H(+). Specifically dimethylates two adjacent adenosines (A1518 and A1519) in the loop of a conserved hairpin near the 3'-end of 16S rRNA in the 30S particle. May play a critical role in biogenesis of 30S subunits. This is Ribosomal RNA small subunit methyltransferase A from Synechococcus sp. (strain CC9902).